A 535-amino-acid polypeptide reads, in one-letter code: Beta-glucosidase 47 (535 aa).

The N-terminal stretch at 1 to 38 (MKKSIVYEIMETKSSMYLSQFRLWLCFIITTLVSLSSS) is a signal peptide. Glutamine 73 provides a ligand contact to a beta-D-glucoside. N-linked (GlcNAc...) asparagine glycosylation is present at asparagine 93. A beta-D-glucoside contacts are provided by residues histidine 175 and 220 to 221 (NE). Catalysis depends on glutamate 221, which acts as the Proton donor. Cysteine 240 and cysteine 247 are oxidised to a cystine. Asparagine 246 carries an N-linked (GlcNAc...) asparagine glycan. Residue tyrosine 363 participates in a beta-D-glucoside binding. Cysteine 371 and cysteine 376 are oxidised to a cystine. An N-linked (GlcNAc...) asparagine glycan is attached at asparagine 419. Glutamate 426 serves as a coordination point for a beta-D-glucoside. Glutamate 426 functions as the Nucleophile in the catalytic mechanism. The N-linked (GlcNAc...) asparagine glycan is linked to asparagine 432. Residues tryptophan 470, 477 to 478 (EW), and phenylalanine 486 each bind a beta-D-glucoside.

Belongs to the glycosyl hydrolase 1 family.

It carries out the reaction Hydrolysis of terminal, non-reducing beta-D-glucosyl residues with release of beta-D-glucose.. In Arabidopsis thaliana (Mouse-ear cress), this protein is Beta-glucosidase 47.